Here is a 299-residue protein sequence, read N- to C-terminus: ATP phosphoribosyltransferase (299 aa).

It belongs to the ATP phosphoribosyltransferase family. Long subfamily. Equilibrium between an active dimeric form, an inactive hexameric form and higher aggregates. Interconversion between the various forms is largely reversible and is influenced by the natural substrates and inhibitors of the enzyme. Requires Mg(2+) as cofactor.

Its subcellular location is the cytoplasm. It carries out the reaction 1-(5-phospho-beta-D-ribosyl)-ATP + diphosphate = 5-phospho-alpha-D-ribose 1-diphosphate + ATP. It functions in the pathway amino-acid biosynthesis; L-histidine biosynthesis; L-histidine from 5-phospho-alpha-D-ribose 1-diphosphate: step 1/9. Its activity is regulated as follows. Feedback inhibited by histidine. Catalyzes the condensation of ATP and 5-phosphoribose 1-diphosphate to form N'-(5'-phosphoribosyl)-ATP (PR-ATP). Has a crucial role in the pathway because the rate of histidine biosynthesis seems to be controlled primarily by regulation of HisG enzymatic activity. The chain is ATP phosphoribosyltransferase from Klebsiella pneumoniae (strain 342).